Consider the following 265-residue polypeptide: Hemin import ATP-binding protein HmuV (265 aa).

The ABC transporter domain occupies 13–249 (LKASNLHLQL…TAVENVYGWP (237 aa)). 45 to 52 (GPNGAGKS) lines the ATP pocket.

Belongs to the ABC transporter superfamily. Heme (hemin) importer (TC 3.A.1.14.5) family. In terms of assembly, the complex is composed of two ATP-binding proteins (HmuV), two transmembrane proteins (HmuU) and a solute-binding protein (HmuT).

The protein resides in the cell inner membrane. Part of the ABC transporter complex HmuTUV involved in hemin import. Responsible for energy coupling to the transport system. This Photobacterium damsela subsp. piscicida (Pasteurella piscicida) protein is Hemin import ATP-binding protein HmuV.